Reading from the N-terminus, the 213-residue chain is Ribosomal RNA large subunit methyltransferase E (213 aa).

5 residues coordinate S-adenosyl-L-methionine: Gly59, Phe61, Asp79, Asp97, and Asp121. The Proton acceptor role is filled by Lys161.

Belongs to the class I-like SAM-binding methyltransferase superfamily. RNA methyltransferase RlmE family.

The protein resides in the cytoplasm. The enzyme catalyses uridine(2552) in 23S rRNA + S-adenosyl-L-methionine = 2'-O-methyluridine(2552) in 23S rRNA + S-adenosyl-L-homocysteine + H(+). In terms of biological role, specifically methylates the uridine in position 2552 of 23S rRNA at the 2'-O position of the ribose in the fully assembled 50S ribosomal subunit. This is Ribosomal RNA large subunit methyltransferase E from Myxococcus xanthus (strain DK1622).